We begin with the raw amino-acid sequence, 448 residues long: tRNA(Ile)-lysidine synthase (448 aa).

28 to 33 lines the ATP pocket; that stretch reads STGVDS.

This sequence belongs to the tRNA(Ile)-lysidine synthase family.

It is found in the cytoplasm. The catalysed reaction is cytidine(34) in tRNA(Ile2) + L-lysine + ATP = lysidine(34) in tRNA(Ile2) + AMP + diphosphate + H(+). Functionally, ligates lysine onto the cytidine present at position 34 of the AUA codon-specific tRNA(Ile) that contains the anticodon CAU, in an ATP-dependent manner. Cytidine is converted to lysidine, thus changing the amino acid specificity of the tRNA from methionine to isoleucine. This chain is tRNA(Ile)-lysidine synthase, found in Lactiplantibacillus plantarum (strain ATCC BAA-793 / NCIMB 8826 / WCFS1) (Lactobacillus plantarum).